Here is a 218-residue protein sequence, read N- to C-terminus: Small ribosomal subunit protein uS3c (218 aa).

One can recognise a KH type-2 domain in the interval 47–118 (VQNNIRISSG…KLNIAITRIS (72 aa)).

This sequence belongs to the universal ribosomal protein uS3 family. Part of the 30S ribosomal subunit.

Its subcellular location is the plastid. The protein resides in the chloroplast. This is Small ribosomal subunit protein uS3c (rps3) from Draba nemorosa (Woodland whitlowgrass).